Reading from the N-terminus, the 92-residue chain is Ferredoxin-like protein in nif region (92 aa).

4Fe-4S ferredoxin-type domains lie at 2–28 (ALKI…SLAG) and 29–65 (PHFE…LADG). The [4Fe-4S] cluster site is built by Cys-9, Cys-12, Cys-15, Cys-19, Cys-38, Cys-41, Cys-50, and Cys-54.

[4Fe-4S] cluster is required as a cofactor.

Ferredoxins are iron-sulfur proteins that transfer electrons in a wide variety of metabolic reactions. The polypeptide is Ferredoxin-like protein in nif region (Azotobacter vinelandii).